A 171-amino-acid chain; its full sequence is Tetratricopeptide repeat protein 9C (171 aa).

TPR repeat units lie at residues 8–41 (AQVYKEEGNQRYREGKYRDAVSRYHRALLQLRGL), 72–107 (THCYNNLAACLLQMEPVNYERVREYSQKVLERQPDN), and 108–141 (AKALYRAGVAFFHLQDYDRARHHLLAAVNRQPKD).

The protein belongs to the TTC9 family.

The chain is Tetratricopeptide repeat protein 9C (Ttc9c) from Mus musculus (Mouse).